The primary structure comprises 148 residues: Large ribosomal subunit protein bL19 (148 aa).

This sequence belongs to the bacterial ribosomal protein bL19 family.

Functionally, this protein is located at the 30S-50S ribosomal subunit interface and may play a role in the structure and function of the aminoacyl-tRNA binding site. The polypeptide is Large ribosomal subunit protein bL19 (Paramagnetospirillum magneticum (strain ATCC 700264 / AMB-1) (Magnetospirillum magneticum)).